The primary structure comprises 391 residues: Ammonium transporter Amt1 (391 aa).

Residues 1–7 (MSDGNVA) lie on the Extracellular side of the membrane. Residues 8–27 (WILASTALVMLMVPGVGFFY) form a helical membrane-spanning segment. Topologically, residues 28-38 (AGMVRRKNAVN) are cytoplasmic. The helical transmembrane segment at 39–57 (MIALSFISLIITVLLWIFY) threads the bilayer. Residues 58–89 (GYSVSFGNDISGIIGGLNYALLSGVKGEDLLF) lie on the Extracellular side of the membrane. The chain crosses the membrane as a helical span at residues 90 to 106 (MMYQMMFAAVTIAILTS). At 107 to 113 (AIAERAK) the chain is on the cytoplasmic side. A helical membrane pass occupies residues 114–137 (VSSFILLSALWLTFVYAPFAHWLW). Residues 138–152 (GGGWLAKLGALDFAG) lie on the Extracellular side of the membrane. A helical transmembrane segment spans residues 153 to 170 (GMVVHISSGFAALAVAMT). At 171–188 (IGKRAGFEEYSIEPHSIP) the chain is on the cytoplasmic side. A helical transmembrane segment spans residues 189–208 (LTLIGAALLWFGWFGFNGGS). Residues 209-217 (ALAANDVAI) lie on the Extracellular side of the membrane. The helical transmembrane segment at 218 to 237 (NAVVVTNTSAAVAGFVWMVI) threads the bilayer. Over 238-245 (GWIKGKPG) the chain is Cytoplasmic. Residues 246–263 (SLGIVSGAIAGLAAITPA) traverse the membrane as a helical segment. Residues 264-268 (AGFVD) are Extracellular-facing. The chain crosses the membrane as a helical span at residues 269-287 (VKGAIVIGLVAGIVCYLAM). At 288–300 (DFRIKKKIDESLD) the chain is on the cytoplasmic side. Residues 301 to 319 (AWAIHGIGGLWGSVAVGIL) traverse the membrane as a helical segment. Residues 320 to 337 (ANPEVNGYAGLLFGNPQL) are Extracellular-facing. A helical transmembrane segment spans residues 338 to 363 (LVSQLIAVASTTAYAFLVTLILAKAV). Over 364–391 (DAAVGLRVSSQEEYVGLDLSQHEEVAYT) the chain is Cytoplasmic.

It belongs to the ammonia transporter channel (TC 1.A.11.2) family. Homotrimer.

Its subcellular location is the cell membrane. Its function is as follows. Involved in the uptake of ammonium/ammonia (NH(4)(+)/NH(3)). Transport is electrogenic. Transport the ammonium and methylammonium cation with high specificity. This Archaeoglobus fulgidus (strain ATCC 49558 / DSM 4304 / JCM 9628 / NBRC 100126 / VC-16) protein is Ammonium transporter Amt1.